The sequence spans 1119 residues: Putative transcription factor SEF1 (1119 aa).

Disordered regions lie at residues 1 to 70 and 86 to 105; these read MGDP…TQSR and QNGEDSSNISNNSNAVSKGK. A compositionally biased stretch (polar residues) spans 47-70; that stretch reads LHTQQSYYGNGTDGASESALTQSR. The segment at residues 118–148 is a DNA-binding region (zn(2)-C6 fungal-type); sequence CTHCRQHKIKCNASEKFPAPCSRCERMGLHC. Disordered regions lie at residues 236-290, 306-335, 894-913, 926-962, and 994-1018; these read QLLQ…PANT, SQQISSSSPQNSSPTTTGHSPANDLSSSKQ, ASSSSTATRLNADNPTTDTN, KKSSKSSDTPTNKPKFNSTSSIPTATPTSEQRAAHNT, and SADSNGTSNNNIPNSTAPLNTPDTN. Residues 243–260 show a composition bias toward low complexity; it reads TTTTNPTTSSNSKVVTPT. Positions 261–288 are enriched in polar residues; the sequence is GSDHSPASHNGGSLSSGKPQLLNDSVPA. Residues 306–322 are compositionally biased toward low complexity; it reads SQQISSSSPQNSSPTTT. 3 stretches are compositionally biased toward polar residues: residues 323–335, 902–913, and 931–942; these read GHSPANDLSSSKQ, RLNADNPTTDTN, and SSDTPTNKPKFN. Residues 943-954 show a composition bias toward low complexity; sequence STSSIPTATPTS.

It is found in the nucleus. Its function is as follows. Putative transcription factor. Suppresses the lethal phenotype of RPM2 deletion. The protein is Putative transcription factor SEF1 (SEF1) of Kluyveromyces lactis (strain ATCC 8585 / CBS 2359 / DSM 70799 / NBRC 1267 / NRRL Y-1140 / WM37) (Yeast).